Here is a 589-residue protein sequence, read N- to C-terminus: Putative phospholipase B-like 2 (589 aa).

The signal sequence occupies residues Met1 to Ala41. Residues Asn88 and Asn110 are each glycosylated (N-linked (GlcNAc...) asparagine). A disulfide bridge connects residues Cys142 and Cys152. 4 N-linked (GlcNAc...) asparagine glycosylation sites follow: Asn174, Asn231, Asn436, and Asn465. Cys492 and Cys495 are joined by a disulfide. An N-linked (GlcNAc...) asparagine glycan is attached at Asn515.

It belongs to the phospholipase B-like family. As to quaternary structure, interacts with IGF2R. Glycosylated; contains mannose 6-phosphate sugars.

The protein localises to the lysosome lumen. Its function is as follows. Putative phospholipase. This chain is Putative phospholipase B-like 2 (PLBD2), found in Bos taurus (Bovine).